The primary structure comprises 320 residues: Porphobilinogen deaminase (320 aa).

An S-(dipyrrolylmethanemethyl)cysteine modification is found at cysteine 241.

The protein belongs to the HMBS family. Monomer. It depends on dipyrromethane as a cofactor.

The catalysed reaction is 4 porphobilinogen + H2O = hydroxymethylbilane + 4 NH4(+). The protein operates within porphyrin-containing compound metabolism; protoporphyrin-IX biosynthesis; coproporphyrinogen-III from 5-aminolevulinate: step 2/4. Tetrapolymerization of the monopyrrole PBG into the hydroxymethylbilane pre-uroporphyrinogen in several discrete steps. The sequence is that of Porphobilinogen deaminase from Thermobifida fusca (strain YX).